The following is a 391-amino-acid chain: Glutamate 5-kinase (391 aa).

Residue Lys17 coordinates ATP. 3 residues coordinate substrate: Ser57, Asp144, and Asn156. Residues 176-177 and 216-222 each bind ATP; these read SD and TGGMTTK. A PUA domain is found at 278–356; sequence QGQIVIDDGA…AWLAAEMGPA (79 aa). Residues 370 to 391 are disordered; it reads SRRRKAEPSSRNQKSSGSRVTS. A compositionally biased stretch (polar residues) spans 378 to 391; it reads SSRNQKSSGSRVTS.

The protein belongs to the glutamate 5-kinase family.

It is found in the cytoplasm. The catalysed reaction is L-glutamate + ATP = L-glutamyl 5-phosphate + ADP. It participates in amino-acid biosynthesis; L-proline biosynthesis; L-glutamate 5-semialdehyde from L-glutamate: step 1/2. Catalyzes the transfer of a phosphate group to glutamate to form L-glutamate 5-phosphate. The chain is Glutamate 5-kinase from Cutibacterium acnes (strain DSM 16379 / KPA171202) (Propionibacterium acnes).